The sequence spans 466 residues: MAAARSRVVHLLRLLQRAACQCPSHSHTYSQAPGLSPSGKTTDYAFEMAVSTIRYGAGVTKEVGMDLQSMGAKNVCLMTDKNLSQLPPVQTVMDSLVKNGINFKVYDHVRVEPTDTSFMEAIEFAKKGAFDAFLAVGGGSTIDTCKAANLYSSSPDSDFLDYVNAPIGKGKPVTVPLKPLIAVPTTSGTGSETTGVAIFDYEHLKVKTGIASRAIKPTLGLIDPLHTLHMPERVVANSGFDVLCHALESYTALPYHMRSPCPSSPITRPAYQGSNPISDIWAVHALRIVAKYLKRAIRNPDDLEARSNMHLASAFAGIGFGNAGVHLCHGMSYPISGLVKTYKAKDYNVDHPLVPHGLSVVLTSPAVFTFTSQMFPERHLEVAEILGADTRTARRPDAGPVLADTLRKFLFDLDVDDGLAAIGYSKADIPELVKGTLPQERVTKLAPRPQSEEDLSALFEASMKLY.

K444 is subject to N6-acetyllysine. Position 451 is a phosphoserine (S451).

It belongs to the iron-containing alcohol dehydrogenase family. Hydroxyacid-oxoacid transhydrogenase subfamily.

The protein localises to the mitochondrion. The catalysed reaction is (S)-3-hydroxybutanoate + 2-oxoglutarate = (R)-2-hydroxyglutarate + acetoacetate. The enzyme catalyses 4-hydroxybutanoate + 2-oxoglutarate = (R)-2-hydroxyglutarate + succinate semialdehyde. Catalyzes the cofactor-independent reversible oxidation of gamma-hydroxybutyrate (GHB) to succinic semialdehyde (SSA) coupled to reduction of 2-ketoglutarate (2-KG) to D-2-hydroxyglutarate (D-2-HG). L-3-hydroxybutyrate (L-3-OHB) is also a substrate for HOT when using 2-KG as hydrogen acceptor, resulting in the formation of D-2-HG. The polypeptide is Hydroxyacid-oxoacid transhydrogenase, mitochondrial (ADHFE1) (Bos taurus (Bovine)).